The chain runs to 104 residues: L-rhamnose mutarotase (104 aa).

Tyrosine 18 serves as a coordination point for substrate. Histidine 22 (proton donor) is an active-site residue. Substrate contacts are provided by residues tyrosine 41 and 76–77; that span reads WW.

It belongs to the rhamnose mutarotase family. Homodimer.

Its subcellular location is the cytoplasm. It carries out the reaction alpha-L-rhamnose = beta-L-rhamnose. It functions in the pathway carbohydrate metabolism; L-rhamnose metabolism. Involved in the anomeric conversion of L-rhamnose. The sequence is that of L-rhamnose mutarotase from Burkholderia cenocepacia (strain HI2424).